Consider the following 372-residue polypeptide: GTPase Obg (372 aa).

Residues Met1–Leu159 form the Obg domain. The interval Leu128 to Gly147 is disordered. In terms of domain architecture, OBG-type G spans Ala160–Val334. Residues Gly166–Ser173, Phe191–Ala195, Asp213–Gly216, Asn284–Asp287, and Ser315–Leu317 each bind GTP. 2 residues coordinate Mg(2+): Ser173 and Thr193.

The protein belongs to the TRAFAC class OBG-HflX-like GTPase superfamily. OBG GTPase family. As to quaternary structure, monomer. Mg(2+) serves as cofactor.

The protein localises to the cytoplasm. In terms of biological role, an essential GTPase which binds GTP, GDP and possibly (p)ppGpp with moderate affinity, with high nucleotide exchange rates and a fairly low GTP hydrolysis rate. Plays a role in control of the cell cycle, stress response, ribosome biogenesis and in those bacteria that undergo differentiation, in morphogenesis control. This Burkholderia mallei (strain NCTC 10247) protein is GTPase Obg.